A 544-amino-acid chain; its full sequence is Chaperonin GroEL (544 aa).

Residues 29 to 32, 86 to 90, Gly413, 476 to 478, and Asp492 contribute to the ATP site; these read TLGP, DGTTT, and NAA.

Belongs to the chaperonin (HSP60) family. Forms a cylinder of 14 subunits composed of two heptameric rings stacked back-to-back. Interacts with the co-chaperonin GroES.

It is found in the cytoplasm. The protein localises to the secreted. It catalyses the reaction ATP + H2O + a folded polypeptide = ADP + phosphate + an unfolded polypeptide.. Together with its co-chaperonin GroES, plays an essential role in assisting protein folding. The GroEL-GroES system forms a nano-cage that allows encapsulation of the non-native substrate proteins and provides a physical environment optimized to promote and accelerate protein folding. In Bacillus subtilis (strain 168), this protein is Chaperonin GroEL.